Consider the following 205-residue polypeptide: Holliday junction branch migration complex subunit RuvA (205 aa).

A domain I region spans residues 1 to 64 (MIGRLRGVLV…EDAQLLYGFI (64 aa)). The tract at residues 65-143 (TKQERALFRL…SLMEASAGSE (79 aa)) is domain II. Residues 144–156 (REFVLQSNYSPAP) are flexible linker. Residues 157–205 (TVNSAEEDAISALISLGYKPPQASKSVSAAYKEGMDSETLIKAALKSML) are domain III.

This sequence belongs to the RuvA family. As to quaternary structure, homotetramer. Forms an RuvA(8)-RuvB(12)-Holliday junction (HJ) complex. HJ DNA is sandwiched between 2 RuvA tetramers; dsDNA enters through RuvA and exits via RuvB. An RuvB hexamer assembles on each DNA strand where it exits the tetramer. Each RuvB hexamer is contacted by two RuvA subunits (via domain III) on 2 adjacent RuvB subunits; this complex drives branch migration. In the full resolvosome a probable DNA-RuvA(4)-RuvB(12)-RuvC(2) complex forms which resolves the HJ.

The protein localises to the cytoplasm. The RuvA-RuvB-RuvC complex processes Holliday junction (HJ) DNA during genetic recombination and DNA repair, while the RuvA-RuvB complex plays an important role in the rescue of blocked DNA replication forks via replication fork reversal (RFR). RuvA specifically binds to HJ cruciform DNA, conferring on it an open structure. The RuvB hexamer acts as an ATP-dependent pump, pulling dsDNA into and through the RuvAB complex. HJ branch migration allows RuvC to scan DNA until it finds its consensus sequence, where it cleaves and resolves the cruciform DNA. In Shewanella baltica (strain OS223), this protein is Holliday junction branch migration complex subunit RuvA.